A 347-amino-acid chain; its full sequence is Secretory carrier-associated membrane protein 3 (347 aa).

Residues 1–88 (MAQSRDGGNP…EPKNYGSYST (88 aa)) are disordered. Residues 1–170 (MAQSRDGGNP…QKTVSTMYYL (170 aa)) are Cytoplasmic-facing. Residue S32 is modified to Phosphoserine. A Phosphothreonine modification is found at T37. A phosphotyrosine mark is found at Y41 and Y53. Over residues 49-66 (PPPAYEPPAPAPLPPPSA) the composition is skewed to pro residues. Phosphoserine is present on residues S72 and S76. At Y83 the chain carries Phosphotyrosine. Phosphoserine is present on S85. Helical transmembrane passes span 171 to 191 (WMCS…SFCV), 197 to 217 (AGFG…FVCW), 247 to 267 (FVLQ…SALV), and 277 to 297 (VLML…IVML). The Cytoplasmic segment spans residues 298 to 347 (KRIHSLYRRTGASFQKAQQEFAAGVFSNPAVRTAAANAAAGAAENAFRAP). K313 participates in a covalent cross-link: Glycyl lysine isopeptide (Lys-Gly) (interchain with G-Cter in SUMO1).

This sequence belongs to the SCAMP family. Interacts with NEDD4, NEDD4L and TSG101. Interacts with RNF126. Monoubiquitinated. Widely expressed, with highest expression in heart and skeletal muscle.

The protein localises to the membrane. Functionally, functions in post-Golgi recycling pathways. Acts as a recycling carrier to the cell surface. The polypeptide is Secretory carrier-associated membrane protein 3 (SCAMP3) (Homo sapiens (Human)).